We begin with the raw amino-acid sequence, 260 residues long: Adenosylcobinamide-GDP ribazoletransferase (260 aa).

A run of 7 helical transmembrane segments spans residues 42–62, 68–88, 118–137, 144–166, 180–200, 201–221, and 237–257; these read TWALPVAGLLVGLAGALVYKI, LTPNLAALLALATTALITGAL, IGTYGVCALILSFGLRWSAL, WLVTLALCAAHCAARAGVPAFMS, AGAPPGRSVAIAFAVGTLVLT, LALGPGKALVGLILLSLAGLI, and ILGAFEQTGEIVILLVAAAFQ.

Belongs to the CobS family. Requires Mg(2+) as cofactor.

The protein resides in the cell inner membrane. The catalysed reaction is alpha-ribazole + adenosylcob(III)inamide-GDP = adenosylcob(III)alamin + GMP + H(+). It catalyses the reaction alpha-ribazole 5'-phosphate + adenosylcob(III)inamide-GDP = adenosylcob(III)alamin 5'-phosphate + GMP + H(+). It functions in the pathway cofactor biosynthesis; adenosylcobalamin biosynthesis; adenosylcobalamin from cob(II)yrinate a,c-diamide: step 7/7. Its function is as follows. Joins adenosylcobinamide-GDP and alpha-ribazole to generate adenosylcobalamin (Ado-cobalamin). Also synthesizes adenosylcobalamin 5'-phosphate from adenosylcobinamide-GDP and alpha-ribazole 5'-phosphate. The chain is Adenosylcobinamide-GDP ribazoletransferase from Bradyrhizobium diazoefficiens (strain JCM 10833 / BCRC 13528 / IAM 13628 / NBRC 14792 / USDA 110).